The chain runs to 418 residues: NADH-quinone oxidoreductase subunit D (418 aa).

This sequence belongs to the complex I 49 kDa subunit family. As to quaternary structure, NDH-1 is composed of 14 different subunits. Subunits NuoB, C, D, E, F, and G constitute the peripheral sector of the complex.

Its subcellular location is the cell inner membrane. The enzyme catalyses a quinone + NADH + 5 H(+)(in) = a quinol + NAD(+) + 4 H(+)(out). Functionally, NDH-1 shuttles electrons from NADH, via FMN and iron-sulfur (Fe-S) centers, to quinones in the respiratory chain. The immediate electron acceptor for the enzyme in this species is believed to be ubiquinone. Couples the redox reaction to proton translocation (for every two electrons transferred, four hydrogen ions are translocated across the cytoplasmic membrane), and thus conserves the redox energy in a proton gradient. In Neisseria meningitidis serogroup B (strain ATCC BAA-335 / MC58), this protein is NADH-quinone oxidoreductase subunit D.